A 77-amino-acid polypeptide reads, in one-letter code: Serine protease inhibitor 3 (77 aa).

An N-terminal signal peptide occupies residues 1 to 17 (MMFTPLIVLTLLVLATA). 4 cysteine pairs are disulfide-bonded: C21-C53, C30-C48, C33-C44, and C55-C68. One can recognise a TIL domain in the interval 21-74 (CGPNEQWSGCPKCELQSGESDKPCATICGEPKCYCSPDKYRRIPDGRCIRKIQC).

It localises to the secreted. In terms of biological role, defends the organism against the host's proteinases. This is Serine protease inhibitor 3 from Anisakis simplex (Herring worm).